The chain runs to 362 residues: MDSPEVTFTLAYLVFAVCFVFTPNEFYSAGLTVQNLLSGWLGSEDAAFVPYHLRRTSATLLCHSLLPLGYYMGMCFAASEKQLYSPGQAPEAWQLFLLLAVTLPLLSCTLIYYWSWDRWTRHPLAQTLALYALPQSGWQAVASSINTEFRRIDKFATGAPGARVIVTDTWVMKVTTYRVHVAQQQDVHLTVTESRQHDLSPDSNLPVQLLTIRVASTSPGTQPFDIRLNSSEYGELCEKLHAPIRSAANVVIRQSLGDLFLETFASHVEVNPAYSVPSNQELEPCIGCMQTRASVKLVKTCQEPAVGECQQCYCRPMWCLTCMGKWFASRQDPQRPDTWLASRVPCPTCRARFCILDVCCVR.

At 1-6 (MDSPEV) the chain is on the lumenal side. A helical membrane pass occupies residues 7–27 (TFTLAYLVFAVCFVFTPNEFY). At 28-56 (SAGLTVQNLLSGWLGSEDAAFVPYHLRRT) the chain is on the cytoplasmic side. Residues 57 to 77 (SATLLCHSLLPLGYYMGMCFA) traverse the membrane as a helical segment. Residues 78–94 (ASEKQLYSPGQAPEAWQ) lie on the Lumenal side of the membrane. A helical transmembrane segment spans residues 95 to 115 (LFLLLAVTLPLLSCTLIYYWS). At 116–362 (WDRWTRHPLA…FCILDVCCVR (247 aa)) the chain is on the cytoplasmic side. Residues 285-350 (CIGCMQTRAS…ASRVPCPTCR (66 aa)) form an RING-type; degenerate zinc finger.

The protein belongs to the TMEM129 family. Integral component of ER-resident dislocation complexes.

The protein resides in the endoplasmic reticulum membrane. It catalyses the reaction S-ubiquitinyl-[E2 ubiquitin-conjugating enzyme]-L-cysteine + [acceptor protein]-L-lysine = [E2 ubiquitin-conjugating enzyme]-L-cysteine + N(6)-ubiquitinyl-[acceptor protein]-L-lysine.. It participates in protein modification; protein ubiquitination. In terms of biological role, E3 ubiquitin-protein ligase involved in ER-associated protein degradation, preferentially associates with the E2 enzyme UBE2J2. Exploited by viral US11 proteins to mediate HLA class I proteins degradation. This Mus musculus (Mouse) protein is E3 ubiquitin-protein ligase TM129 (Tmem129).